Here is a 156-residue protein sequence, read N- to C-terminus: Small ribosomal subunit protein uS7 (156 aa).

It belongs to the universal ribosomal protein uS7 family. As to quaternary structure, part of the 30S ribosomal subunit. Contacts proteins S9 and S11.

Its function is as follows. One of the primary rRNA binding proteins, it binds directly to 16S rRNA where it nucleates assembly of the head domain of the 30S subunit. Is located at the subunit interface close to the decoding center, probably blocks exit of the E-site tRNA. The chain is Small ribosomal subunit protein uS7 from Streptococcus uberis (strain ATCC BAA-854 / 0140J).